Consider the following 70-residue polypeptide: Conotoxin TxMMSK-02 (70 aa).

A signal peptide spans 1–20 (MMSKLGALLTICLLLFSLTA). Residues 21-53 (VPLDGDQHADQPAQRLQDRIPTEDHPLFDPNKR) constitute a propeptide that is removed on maturation. 3 disulfide bridges follow: C54–C68, C55–C64, and C60–C67. P66 is modified (4-hydroxyproline). Y69 is subject to Tyrosine amide.

The protein belongs to the conotoxin M superfamily. As to expression, expressed by the venom duct.

The protein resides in the secreted. The protein is Conotoxin TxMMSK-02 of Conus textile (Cloth-of-gold cone).